The primary structure comprises 177 residues: MKLPKEGDFITIQSYKHDGRLHRTWRDTMVLKTTENAVIGVNDHTLVTEADGRRWVTREPAIVYFHKKYWFNIIAMIRDNGISYYCNLASPYVLDQEALKYIDYDLDVKVFADGEKKLLDVDEYEIHKKEMHYSPDIDYILKEHVKILVDWINNGKGPFSQSYVNIWYKRYLELRNR.

The active-site Proton donor is the arginine 23. The Mg(2+) site is built by asparagine 87, aspartate 103, aspartate 105, aspartate 107, aspartate 120, and glutamate 123.

This sequence belongs to the Ntdp family. The cofactor is Mg(2+).

The enzyme catalyses a ribonucleoside 5'-triphosphate + H2O = a ribonucleoside 5'-diphosphate + phosphate + H(+). It carries out the reaction a ribonucleoside 5'-diphosphate + H2O = a ribonucleoside 5'-phosphate + phosphate + H(+). Has nucleoside phosphatase activity towards nucleoside triphosphates and nucleoside diphosphates. The chain is Nucleoside triphosphate/diphosphate phosphatase from Streptococcus thermophilus (strain CNRZ 1066).